The sequence spans 194 residues: Type II secretion system protein H (194 aa).

Positions 1–6 are cleaved as a propeptide — leader sequence; that stretch reads MTATRG. N-methylphenylalanine is present on Phe7. Residues 12–32 form a helical membrane-spanning segment; it reads ILLVLVLVSASAVAVIATFPV.

It belongs to the GSP H family. Type II secretion is composed of four main components: the outer membrane complex, the inner membrane complex, the cytoplasmic secretion ATPase and the periplasm-spanning pseudopilus. Interacts with core component EpsG. Post-translationally, cleaved by prepilin peptidase. In terms of processing, methylated by prepilin peptidase at the amino group of the N-terminal phenylalanine once the leader sequence is cleaved by prepilin peptidase.

It is found in the cell inner membrane. Its function is as follows. Component of the type II secretion system required for the energy-dependent secretion of extracellular factors such as proteases and toxins from the periplasm. Part of the pseudopilus tip complex that is critical for the recognition and binding of secretion substrates. This chain is Type II secretion system protein H (epsH), found in Vibrio cholerae serotype O1 (strain ATCC 39315 / El Tor Inaba N16961).